The following is a 265-amino-acid chain: Glutamate 5-kinase (265 aa).

Lys15 provides a ligand contact to ATP. Residues Ser55, Asp142, and Asn158 each coordinate substrate. Residues 178–179 and 220–226 contribute to the ATP site; these read SD and TGGMVTK.

It belongs to the glutamate 5-kinase family.

The protein resides in the cytoplasm. It carries out the reaction L-glutamate + ATP = L-glutamyl 5-phosphate + ADP. Its pathway is amino-acid biosynthesis; L-proline biosynthesis; L-glutamate 5-semialdehyde from L-glutamate: step 1/2. In terms of biological role, catalyzes the transfer of a phosphate group to glutamate to form L-glutamate 5-phosphate. This chain is Glutamate 5-kinase, found in Lactiplantibacillus plantarum (strain ATCC BAA-793 / NCIMB 8826 / WCFS1) (Lactobacillus plantarum).